Consider the following 314-residue polypeptide: Protein nutcracker (314 aa).

The segment at 1-62 (MSDTKSEIEG…PRLIQEKSTQ (62 aa)) is disordered. Residues 21–34 (QQQQQPQQQQNEQQ) show a composition bias toward low complexity. Positions 257 to 314 (MQMEMKLQPSLLGLPDELYFEIFRYLDKSQLNVVARVNRHLHFYSKEVERKRLKGGRS) are required for interaction with skpA and Cul1, but not with PI31. The 46-residue stretch at 264 to 309 (QPSLLGLPDELYFEIFRYLDKSQLNVVARVNRHLHFYSKEVERKRL) folds into the F-box domain.

Component of an SCF (SKP1-CUL1-F-box protein) E3 ubiquitin-protein ligase complex, at least composed of ntc, skpA and Cul1. Interacts (via F-box domain) with skpA and Cul1. Interacts with Prosalpha7 and PI31. Interacts with Bruce. Expressed in testis (at protein level).

The protein localises to the cytoplasm. Functionally, functions together with PI31 to control non-apoptotic caspase activation during sperm individualization. Positively regulates PI31 stability. The chain is Protein nutcracker from Drosophila melanogaster (Fruit fly).